We begin with the raw amino-acid sequence, 270 residues long: BPI fold-containing family A member 1 (270 aa).

An N-terminal signal peptide occupies residues 1-19 (MFLVGSLVVLCGLLAQSTA). The segment at 104 to 109 (LVGGLL) is important for surfactant activity and antibacterial properties. Asn174 carries an N-linked (GlcNAc...) asparagine glycan. Cysteines 196 and 238 form a disulfide.

The protein belongs to the BPI/LBP/Plunc superfamily. Plunc family. Monomer. Interacts (via N-terminus) with SCNN1B, a subunit of the heterotrimeric epithelial sodium channel (ENaC); this inhibits proteolytic activation of ENaC. Detected in adult nasal epithelium, heart, lung, spleen, testis and salivary gland, and in embryonic nasal epithelium, lung, salivary gland and thymus.

It localises to the secreted. Lipid-binding protein which shows high specificity for the surfactant phospholipid dipalmitoylphosphatidylcholine (DPPC). Plays a role in the innate immune responses of the upper airways. Reduces the surface tension in secretions from airway epithelia and inhibits the formation of biofilm by pathogenic Gram-negative bacteria, such as P.aeruginosa and K.pneumoniae. Negatively regulates proteolytic cleavage of SCNN1G, an event that is required for activation of the epithelial sodium channel (ENaC), and thereby contributes to airway surface liquid homeostasis and proper clearance of mucus. Plays a role in the airway inflammatory response after exposure to irritants. May attract macrophages and neutrophils. The sequence is that of BPI fold-containing family A member 1 (Bpifa1) from Rattus norvegicus (Rat).